The sequence spans 215 residues: Triosephosphate isomerase (215 aa).

The active-site Electrophile is the H82. Catalysis depends on E153, which acts as the Proton acceptor.

This sequence belongs to the triosephosphate isomerase family. As to quaternary structure, homodimer.

It catalyses the reaction D-glyceraldehyde 3-phosphate = dihydroxyacetone phosphate. Its pathway is carbohydrate biosynthesis; gluconeogenesis. It participates in carbohydrate degradation; glycolysis; D-glyceraldehyde 3-phosphate from glycerone phosphate: step 1/1. This chain is Triosephosphate isomerase (Tpi), found in Heliothis virescens (Tobacco budworm moth).